The primary structure comprises 879 residues: DNA mismatch repair protein MutS (879 aa).

An ATP-binding site is contributed by G639–S646.

This sequence belongs to the DNA mismatch repair MutS family.

Its function is as follows. This protein is involved in the repair of mismatches in DNA. It is possible that it carries out the mismatch recognition step. This protein has a weak ATPase activity. In Aromatoleum aromaticum (strain DSM 19018 / LMG 30748 / EbN1) (Azoarcus sp. (strain EbN1)), this protein is DNA mismatch repair protein MutS.